We begin with the raw amino-acid sequence, 170 residues long: Flavodoxin (170 aa).

The 161-residue stretch at 5–165 (IGLFYGTQTG…RIKSWVAQLK (161 aa)) folds into the Flavodoxin-like domain.

The protein belongs to the flavodoxin family. FMN is required as a cofactor.

Low-potential electron donor to a number of redox enzymes. This chain is Flavodoxin (isiB), found in Nostoc sp. (strain PCC 7120 / SAG 25.82 / UTEX 2576).